The primary structure comprises 217 residues: Probable cytidylate kinase (217 aa).

9–17 lines the ATP pocket; it reads GPAGSGKST.

The protein belongs to the cytidylate kinase family. Type 1 subfamily.

It carries out the reaction CMP + ATP = CDP + ADP. It catalyses the reaction dCMP + ATP = dCDP + ADP. The polypeptide is Probable cytidylate kinase (Vairimorpha ceranae (strain BRL01) (Microsporidian parasite)).